A 262-amino-acid chain; its full sequence is MLQYPQIDPVALRIGPLAIHWYGLMYLIGFALVYALGRRRITSGHTTSMTVRDLEDLIFYSVLGVVLGGRLGYVLFYKPAYYLANPLEIFYLWEGGMSFHGGLIGVIVVMLLFAHKKRLGFFTVSDFIAPLIPLGLAAGRLGNFINGELWGRPTDVPWAMVFPQSGDGLPRHPSQLYELGLEGIVLFALLWWYSSKPRAAGQVSAMFLMGYGAFRFLVEFTREPDNFLGLLAAGLSMGQWLSIPMVLAGAGLYLFTARPPSR.

The next 4 membrane-spanning stretches (helical) occupy residues 17–37 (LAIH…YALG), 57–77 (LIFY…VLFY), 95–115 (GGMS…LFAH), and 119–139 (LGFF…LAAG). Position 140 (Arg-140) interacts with a 1,2-diacyl-sn-glycero-3-phospho-(1'-sn-glycerol). Transmembrane regions (helical) follow at residues 173 to 193 (PSQL…LWWY), 200 to 220 (AGQV…LVEF), and 227 to 247 (FLGL…PMVL).

It belongs to the Lgt family.

The protein localises to the cell inner membrane. The catalysed reaction is L-cysteinyl-[prolipoprotein] + a 1,2-diacyl-sn-glycero-3-phospho-(1'-sn-glycerol) = an S-1,2-diacyl-sn-glyceryl-L-cysteinyl-[prolipoprotein] + sn-glycerol 1-phosphate + H(+). The protein operates within protein modification; lipoprotein biosynthesis (diacylglyceryl transfer). Catalyzes the transfer of the diacylglyceryl group from phosphatidylglycerol to the sulfhydryl group of the N-terminal cysteine of a prolipoprotein, the first step in the formation of mature lipoproteins. The polypeptide is Phosphatidylglycerol--prolipoprotein diacylglyceryl transferase (Bordetella parapertussis (strain 12822 / ATCC BAA-587 / NCTC 13253)).